The chain runs to 161 residues: Protein-export protein SecB (161 aa).

The protein belongs to the SecB family. In terms of assembly, homotetramer, a dimer of dimers. One homotetramer interacts with 1 SecA dimer.

The protein localises to the cytoplasm. One of the proteins required for the normal export of preproteins out of the cell cytoplasm. It is a molecular chaperone that binds to a subset of precursor proteins, maintaining them in a translocation-competent state. It also specifically binds to its receptor SecA. In Bradyrhizobium diazoefficiens (strain JCM 10833 / BCRC 13528 / IAM 13628 / NBRC 14792 / USDA 110), this protein is Protein-export protein SecB.